A 607-amino-acid chain; its full sequence is MDNSYNLNEQSSWNGISSEKKKNYLASEDHGQKILSVLQSFREQNVFYDFKIIMKEEIIPCHRCVLAACSDFFRAMFEVNMKERDDGSVTITNLSSKAVKAFLDYAYTGKTRITDDNVEMFFQLSSFLQVSFLSKACSDFLIKSISLVNCLHLLSLSDSYGSAQLFSHTLYFVQHHFHLLYKSSDFLEMNFGVLQKCLESDELNVPEEEMVLKAVLTWIKYNLESRQKHLPHLITKVRLHQLSEDTLQDYLLNEEYLLKSTNCFDIIVDAIKCVQGSSGLFPDARPSTTEKYIFIHKTEENGENQYTFCYNIKTDSWKILPQSHLIDLPGSSLSSYGEKIFLTGGCKGKCCRRIRLHIAQSYHDATDQTWCYCPAKNEFFCVSAMKTPRTMHTSVMALNRLFVIGGKTRGSQDIKSLLDVESYNPLSREWTSVSPLPRGIYYPEASACQNIIYVLGSEVEIADAFNPSLDCFFKYNATTDQWSELVAEFGQFFHATLIKAVPVNCTLYICDLSTYKVYSFCPDTCVWKGEGSFECAGFNAGAIGIEDKIYILGGDYAPDEITDEVQVYHSSRSEWEEVSPMPRALTEFYCQVIQFNKYRDPWYSNHF.

A BTB domain is found at 48–115 (YDFKIIMKEE…AYTGKTRITD (68 aa)). Positions 150 to 250 (CLHLLSLSDS…QLSEDTLQDY (101 aa)) constitute a BACK domain. Kelch repeat units follow at residues 291–337 (KYIF…SSYG), 339–390 (KIFL…TPRT), 400–450 (RLFV…ACQN), 452–502 (IYVL…KAVP), and 548–595 (KIYI…VIQF).

In Mus musculus (Mouse), this protein is Kelch repeat and BTB domain-containing protein 3.